The primary structure comprises 251 residues: MSDSKLAGQFFDAAIGLLTRVRDEESDSIAAAGAAVADTVASGGRLFAFGAGHSSLAAQDVVYRAGGLALMNLLTVPGAVGVDVMPATLGSALERVDGLASAVLDSSPATAGDLLVIVSLSGRNALPVEMAQNARALGLKVIGLTSVAYAENTRSRHASGGFLRDHCDIVLDSKIAIGDAELTAPGVEAPFAPASTVVTSAIMQAMLAAAVEQLVARGIEPPMLRSGNVDGGHEWNGRVMTEYRDRIFYRH.

The SIS domain occupies 36–221; it reads VADTVASGGR…EQLVARGIEP (186 aa).

This sequence belongs to the UPF0309 family.

This is UPF0309 protein SGR_3073 from Streptomyces griseus subsp. griseus (strain JCM 4626 / CBS 651.72 / NBRC 13350 / KCC S-0626 / ISP 5235).